Consider the following 117-residue polypeptide: Immunoglobulin kappa variable 1D-12 (117 aa).

An N-terminal signal peptide occupies residues 1-22 (MDMMVPAQLLGLLLLWFPGSRC). Positions 23–45 (DIQMTQSPSSVSASVGDRVTITC) are framework-1. Positions 24–117 (IQMTQSPSSV…YYCQQANSFP (94 aa)) constitute an Ig-like domain. An intrachain disulfide couples cysteine 45 to cysteine 110. The tract at residues 46-56 (RASQGISSWLA) is complementarity-determining-1. Residues 57–71 (WYQQKPGKAPKLLIY) are framework-2. Positions 72 to 78 (AASSLQS) are complementarity-determining-2. The interval 79–110 (GVPSRFSGSGSGTDFTLTISSLQPEDFATYYC) is framework-3. A complementarity-determining-3 region spans residues 111–117 (QQANSFP).

As to quaternary structure, immunoglobulins are composed of two identical heavy chains and two identical light chains; disulfide-linked.

Its subcellular location is the secreted. The protein localises to the cell membrane. Its function is as follows. V region of the variable domain of immunoglobulin light chains that participates in the antigen recognition. Immunoglobulins, also known as antibodies, are membrane-bound or secreted glycoproteins produced by B lymphocytes. In the recognition phase of humoral immunity, the membrane-bound immunoglobulins serve as receptors which, upon binding of a specific antigen, trigger the clonal expansion and differentiation of B lymphocytes into immunoglobulins-secreting plasma cells. Secreted immunoglobulins mediate the effector phase of humoral immunity, which results in the elimination of bound antigens. The antigen binding site is formed by the variable domain of one heavy chain, together with that of its associated light chain. Thus, each immunoglobulin has two antigen binding sites with remarkable affinity for a particular antigen. The variable domains are assembled by a process called V-(D)-J rearrangement and can then be subjected to somatic hypermutations which, after exposure to antigen and selection, allow affinity maturation for a particular antigen. The sequence is that of Immunoglobulin kappa variable 1D-12 from Homo sapiens (Human).